Consider the following 144-residue polypeptide: Transcription antitermination protein NusB (144 aa).

The protein belongs to the NusB family.

In terms of biological role, involved in transcription antitermination. Required for transcription of ribosomal RNA (rRNA) genes. Binds specifically to the boxA antiterminator sequence of the ribosomal RNA (rrn) operons. This chain is Transcription antitermination protein NusB, found in Histophilus somni (strain 129Pt) (Haemophilus somnus).